The primary structure comprises 483 residues: Matrix metalloproteinase-20 (483 aa).

The signal sequence occupies residues 1–22; that stretch reads MKVLPASGLAVLLVTALKFSAA. Positions 23–107 are cleaved as a propeptide — activation peptide; sequence APSLFAATPR…PRCGVPDVAN (85 aa). A Cysteine switch motif is present at residues 98-105; it reads PRCGVPDV. Cys100 serves as a coordination point for Zn(2+). Residues Glu164, Ala165, and Asp166 each coordinate Ca(2+). The Zn(2+) site is built by His176 and Asp178. Ca(2+) contacts are provided by Asp183, Gly184, Arg186, and Thr188. Residue His191 participates in Zn(2+) binding. Glu197, Gly198, Gly200, and Asp202 together coordinate Ca(2+). His204 is a Zn(2+) binding site. The Ca(2+) site is built by Asp206 and Glu209. His226 serves as a coordination point for Zn(2+). Glu227 is a catalytic residue. Residues His230 and His236 each coordinate Zn(2+). Hemopexin repeat units follow at residues 293–343, 344–389, 391–439, and 440–483; these read PDIC…FPQL, MSNV…GFPR, VQRI…FSGV, and NGQI…WIGC. Residues Cys296 and Cys483 are joined by a disulfide bond.

Belongs to the peptidase M10A family. The cofactor is Zn(2+). Ca(2+) is required as a cofactor. Autoactivates at least at the 107-Asn-|-Tyr-108 site. Expressed specifically in the enamel organ.

The protein resides in the secreted. The protein localises to the extracellular space. Its subcellular location is the extracellular matrix. Functionally, degrades amelogenin, the major protein component of the enamel matrix and two of the macromolecules characterizing the cartilage extracellular matrix: aggrecan and the cartilage oligomeric matrix protein (COMP). May play a central role in tooth enamel formation. The sequence is that of Matrix metalloproteinase-20 (MMP20) from Sus scrofa (Pig).